The sequence spans 80 residues: Cytochrome c oxidase subunit 7A1, mitochondrial (80 aa).

Residues M1 to R21 constitute a mitochondrion transit peptide. Residues L22–G46 are Mitochondrial matrix-facing. The helical transmembrane segment at V47–S75 threads the bilayer. Over F76 to K80 the chain is Mitochondrial intermembrane.

This sequence belongs to the cytochrome c oxidase VIIa family. Component of the complex IV (CIV, cytochrome c oxidase), a multisubunit enzyme composed of 14 subunits. The complex is composed of a catalytic core of 3 subunits MT-CO1, MT-CO2 and MT-CO3, encoded in the mitochondrial DNA, and 11 supernumerary subunits COX4I1 (or COX4I2), COX5A, COX5B, COX6A2 (or COX6A1), COX6B1 (or COX6B2), COX6C, COX7A1 (or COX7A2), COX7B, COX7C, COX8B and NDUFA4, which are encoded in the nuclear genome. The complex exists as a monomer or a dimer and forms supercomplexes (SCs) in the inner mitochondrial membrane with NADH-ubiquinone oxidoreductase (complex I, CI) and ubiquinol-cytochrome c oxidoreductase (cytochrome b-c1 complex, complex III, CIII), resulting in different assemblies (supercomplex SCI(1)III(2)IV(1) and megacomplex MCI(2)III(2)IV(2)).

The protein localises to the mitochondrion inner membrane. It participates in energy metabolism; oxidative phosphorylation. In terms of biological role, component of the mitochondrial respiratory complex IV (CIV, also named cytochrome c oxidase complex), the last enzyme in the mitochondrial electron transport chain which drives oxidative phosphorylation. The CIV complex is the component of the respiratory chain that catalyzes the reduction of oxygen to water. Acts as an assembly factor that specifically drives the homodimerization of CIV complexes, mediating the formation of mitochondrial respiratory supercomplexes (respirasomes) containing two CIV: supercomplxes with two molecules of CIV show improved activity. Despite being highly expressed in brown adipose tissue, not required for thermogenesis. This is Cytochrome c oxidase subunit 7A1, mitochondrial (COX7A1) from Saimiri sciureus (Common squirrel monkey).